Here is a 138-residue protein sequence, read N- to C-terminus: Acidic phospholipase A2 PL1 (138 aa).

The N-terminal stretch at 1 to 16 is a signal peptide; the sequence is MRALWIVAVCLIGAEG. Disulfide bonds link cysteine 42–cysteine 131, cysteine 44–cysteine 60, cysteine 59–cysteine 111, cysteine 65–cysteine 138, cysteine 66–cysteine 104, cysteine 73–cysteine 97, and cysteine 91–cysteine 102. Ca(2+) contacts are provided by tyrosine 43, glycine 45, and glycine 47. The active site involves histidine 63. Aspartate 64 is a binding site for Ca(2+). Residue aspartate 105 is part of the active site.

The protein belongs to the phospholipase A2 family. Group II subfamily. D49 sub-subfamily. Requires Ca(2+) as cofactor. Expressed by the venom gland.

It localises to the secreted. It carries out the reaction a 1,2-diacyl-sn-glycero-3-phosphocholine + H2O = a 1-acyl-sn-glycero-3-phosphocholine + a fatty acid + H(+). Its function is as follows. PLA2 catalyzes the calcium-dependent hydrolysis of the 2-acyl groups in 3-sn-phosphoglycerides. The polypeptide is Acidic phospholipase A2 PL1 (Vipera renardi (Steppe viper)).